Here is a 270-residue protein sequence, read N- to C-terminus: Cross-pathway control protein 1 (270 aa).

Disordered stretches follow at residues 114–135 and 153–213; these read QAQA…QTQP and QTVH…IIVE. Residues 184-195 show a composition bias toward low complexity; it reads SVSPPSGRHSSV. Residues 216–270 form the bZIP domain; the sequence is SDVVAMKRARNTLAARKSRERKAQRLEELEAKIEELIAERDRWKNLALAHGASTE. A basic motif region spans residues 222–240; sequence KRARNTLAARKSRERKAQR. Residues 241–248 are leucine-zipper; the sequence is LEELEAKI.

This sequence belongs to the bZIP family. GCN4 subfamily. Binds DNA as a dimer.

Its subcellular location is the nucleus. Its function is as follows. In N.crassa grown under amino acid starvation conditions, this protein is required for increasing the transcription of the genes coding for many amino acid biosynthetic pathways enzymes. This transcription factor binds and recognize the DNA sequence: 5'-TGACTC-3'. The sequence is that of Cross-pathway control protein 1 (cpc-1) from Neurospora crassa (strain ATCC 24698 / 74-OR23-1A / CBS 708.71 / DSM 1257 / FGSC 987).